A 239-amino-acid chain; its full sequence is MNSVLFLTLAVCSSLAYGKEFVATVRQNYKENINQLLEQQIQKELAASYIYQAYASYFQRADVSLPGIKKFFSDASSEERDDAQSLIDYINQRGGHVQYDKIDLKDACETVMKFVTSDTSGLEEFRDRRMCICGFVATKTINDNCGERSDWKEGLIAFEDTLAIERYVNAQLLDIHKKADDEKDAHLTHILEHEFLEEQVSSINKIAHAITRLRSFEQGSGNNYKLGRVYLRPTPQISH.

Residues 1-18 (MNSVLFLTLAVCSSLAYG) form the signal peptide. Residues 27 to 217 (QNYKENINQL…HAITRLRSFE (191 aa)) enclose the Ferritin-like diiron domain. Fe cation-binding residues include Glu44 and Glu79. The tract at residues 105 to 146 (KDACETVMKFVTSDTSGLEEFRDRRMCICGFVATKTINDNCG) is insertion; not present in other ferritins. Residues Glu165 and Gln199 each contribute to the Fe cation site.

The protein belongs to the ferritin family. Oligomer of 12 or 24 subunits. The functional molecule is roughly spherical and contains a central cavity into which the polymeric ferric iron core is deposited. As to expression, midgut gland and bloodstream.

It localises to the secreted. The catalysed reaction is 4 Fe(2+) + O2 + 4 H(+) = 4 Fe(3+) + 2 H2O. Functionally, stores iron in a soluble, non-toxic, readily available form. Important for iron homeostasis. Has ferroxidase activity. Iron is taken up in the ferrous form and deposited as ferric hydroxides after oxidation. The chain is Yolk ferritin from Lymnaea stagnalis (Great pond snail).